Reading from the N-terminus, the 178-residue chain is Aspartate carbamoyltransferase regulatory chain (178 aa).

The segment covering 1-15 (MNDREPNQKESKESV) has biased composition (basic and acidic residues). The segment at 1 to 23 (MNDREPNQKESKESVNDAVPRAR) is disordered. The Zn(2+) site is built by C133, C138, C159, and C162.

It belongs to the PyrI family. As to quaternary structure, contains catalytic and regulatory chains. Zn(2+) serves as cofactor.

Involved in allosteric regulation of aspartate carbamoyltransferase. This Haloquadratum walsbyi (strain DSM 16790 / HBSQ001) protein is Aspartate carbamoyltransferase regulatory chain.